The sequence spans 191 residues: MLNIGIFGAPGSGKGTQSELISEKYSLYPISTGEILRREIKDKTELGKIAEEYINQGQLLPDYLTIRILVDLFDKVDNNKGYIFDGFPRTISQAKALDDLLKEQNTSIAIVFSLSVDEKELIRRLLKRGKLFSRKDDNLETIQNRLTVYREQTESVQEYYRKKGKLMEIIGKNSVEEVFENIVEKIDNLFR.

11–16 (GSGKGT) provides a ligand contact to ATP. An NMP region spans residues 31-60 (STGEILRREIKDKTELGKIAEEYINQGQLL). Residues Thr-32, Arg-37, 58–60 (QLL), 86–89 (GFPR), and Gln-93 each bind AMP. The tract at residues 127 to 137 (KRGKLFSRKDD) is LID. Residue Arg-128 coordinates ATP. 2 residues coordinate AMP: Arg-134 and Arg-145. Asn-173 lines the ATP pocket.

Belongs to the adenylate kinase family. Monomer.

The protein localises to the cytoplasm. The catalysed reaction is AMP + ATP = 2 ADP. It functions in the pathway purine metabolism; AMP biosynthesis via salvage pathway; AMP from ADP: step 1/1. In terms of biological role, catalyzes the reversible transfer of the terminal phosphate group between ATP and AMP. Plays an important role in cellular energy homeostasis and in adenine nucleotide metabolism. The polypeptide is Adenylate kinase (Azobacteroides pseudotrichonymphae genomovar. CFP2).